Reading from the N-terminus, the 543-residue chain is CTP synthase (543 aa).

Residues 1-265 (MARYIFITGG…DDEVLAAFAI (265 aa)) are amidoligase domain. Ser-13 is a CTP binding site. Ser-13 is a UTP binding site. 14–19 (SLGKGL) is a binding site for ATP. Tyr-54 provides a ligand contact to L-glutamine. Asp-71 is an ATP binding site. Mg(2+) contacts are provided by Asp-71 and Glu-139. CTP is bound by residues 146–148 (DIE), 186–191 (KTKPTQ), and Lys-222. UTP contacts are provided by residues 186-191 (KTKPTQ) and Lys-222. 238–240 (RDA) provides a ligand contact to ATP. Residues 291–542 (TIAIVGKYTG…VQAALVQSRL (252 aa)) enclose the Glutamine amidotransferase type-1 domain. Gly-353 is an L-glutamine binding site. Cys-380 serves as the catalytic Nucleophile; for glutamine hydrolysis. L-glutamine is bound by residues 381–384 (FGMQ), Glu-404, and Arg-470. Residues His-515 and Glu-517 contribute to the active site.

This sequence belongs to the CTP synthase family. In terms of assembly, homotetramer.

The catalysed reaction is UTP + L-glutamine + ATP + H2O = CTP + L-glutamate + ADP + phosphate + 2 H(+). It catalyses the reaction L-glutamine + H2O = L-glutamate + NH4(+). It carries out the reaction UTP + NH4(+) + ATP = CTP + ADP + phosphate + 2 H(+). The protein operates within pyrimidine metabolism; CTP biosynthesis via de novo pathway; CTP from UDP: step 2/2. With respect to regulation, allosterically activated by GTP, when glutamine is the substrate; GTP has no effect on the reaction when ammonia is the substrate. The allosteric effector GTP functions by stabilizing the protein conformation that binds the tetrahedral intermediate(s) formed during glutamine hydrolysis. Inhibited by the product CTP, via allosteric rather than competitive inhibition. Its function is as follows. Catalyzes the ATP-dependent amination of UTP to CTP with either L-glutamine or ammonia as the source of nitrogen. Regulates intracellular CTP levels through interactions with the four ribonucleotide triphosphates. The polypeptide is CTP synthase (Rhodopseudomonas palustris (strain ATCC BAA-98 / CGA009)).